A 433-amino-acid polypeptide reads, in one-letter code: Serine/threonine-protein kinase STK11 (433 aa).

Residue Ser-31 is modified to Phosphoserine. N6-acetyllysine occurs at positions 44 and 48. A sufficient for interaction with SIRT1 region spans residues 45-90 (LIGKYLMGDLLGEGSYGKVKEVLDSETLCRRAVKILKKKKLRRIPN). Positions 49-309 (YLMGDLLGEG…IRQIRQHSWF (261 aa)) constitute a Protein kinase domain. ATP-binding positions include 55–63 (LGEGSYGKV) and Lys-78. Residues Lys-96 and Lys-97 each carry the N6-acetyllysine modification. The active-site Proton acceptor is the Asp-176. Thr-189 carries the phosphothreonine; by autocatalysis modification. 2 positions are modified to N6-acetyllysine: Lys-296 and Lys-311. The tract at residues 312–331 (KHPPAEAPVPIPPSPDTKDR) is disordered. Residues 316–326 (AEAPVPIPPSP) are compositionally biased toward pro residues. The residue at position 325 (Ser-325) is a Phosphoserine. Thr-336 bears the Phosphothreonine; by autocatalysis mark. Position 363 is a phosphothreonine; by ATM and autocatalysis (Thr-363). Residues 397-433 (AAQLSTKSRAEGRAPNPARKACSASSKIRRLSACKQQ) are disordered. Residues Gln-399 and Ser-401 each carry the phosphoserine modification. Residue Lys-416 is modified to N6-acetyllysine. A lipid anchor (S-palmitoyl cysteine) is attached at Cys-418. Lys-423 carries the N6-acetyllysine modification. The span at 423–433 (KIRRLSACKQQ) shows a compositional bias: basic residues. Residue Ser-428 is modified to Phosphoserine; by autocatalysis, PKA, PKC/PRKCZ and RPS6KA1. Cys-430 carries the cysteine methyl ester modification. A lipid anchor (S-farnesyl cysteine) is attached at Cys-430. An N6-acetyllysine modification is found at Lys-431. The propeptide at 431–433 (KQQ) is removed in mature form.

This sequence belongs to the protein kinase superfamily. CAMK Ser/Thr protein kinase family. LKB1 subfamily. Catalytic component of a trimeric complex composed of STK11/LKB1, STRAD (STRADA or STRADB) and CAB39/MO25 (CAB39/MO25alpha or CAB39L/MO25beta): the complex tethers STK11/LKB1 in the cytoplasm and stimulates its catalytic activity. Found in a ternary complex composed of SMAD4, STK11/LKB1 and STK11IP. Interacts with p53/TP53, SMAD4, STK11IP and WDR6. Interacts with NR4A1. Interacts with NISCH; this interaction may increase STK11 activity. Interacts with PTEN; leading to PTEN phosphorylation. Interacts with SIRT1; the interaction deacetylates STK11. Interacts with CDKN1A. Mg(2+) serves as cofactor. Mn(2+) is required as a cofactor. Phosphorylated by ATM at Thr-363 following ionizing radiation (IR). Phosphorylation at Ser-428 by RPS6KA1 and/or some PKA is required to inhibit cell growth. Phosphorylation at Ser-428 is also required during neuronal polarization to mediate phosphorylation of BRSK1 and BRSK2. Phosphorylation by PKC/PRKCZ at Ser-399 in isoform 2 promotes metformin (or peroxynitrite)-induced nuclear export of STK11 and activation of AMPK. UV radiation-induced phosphorylation at Thr-363 mediates CDKN1A degradation. In terms of processing, acetylated. Deacetylation at Lys-48 enhances cytoplasmic localization and kinase activity in vitro. In terms of tissue distribution, ubiquitously expressed. Strongest expression in testis and fetal liver.

The protein resides in the nucleus. The protein localises to the cytoplasm. It localises to the membrane. It is found in the mitochondrion. The catalysed reaction is L-seryl-[protein] + ATP = O-phospho-L-seryl-[protein] + ADP + H(+). The enzyme catalyses L-threonyl-[protein] + ATP = O-phospho-L-threonyl-[protein] + ADP + H(+). Its activity is regulated as follows. Activated by forming a complex with STRAD (STRADA or STRADB) and CAB39/MO25 (CAB39/MO25alpha or CAB39L/MO25beta): STRADA (or STRADB)-binding promotes a conformational change of STK11/LKB1 in an active conformation, which is stabilized by CAB39/MO25alpha (or CAB39L/MO25beta) interacting with the STK11/LKB1 activation loop. Sequestration in the nucleus by NR4A1 prevents it from phosphorylating and activating cytoplasmic AMPK. Its function is as follows. Tumor suppressor serine/threonine-protein kinase that controls the activity of AMP-activated protein kinase (AMPK) family members, thereby playing a role in various processes such as cell metabolism, cell polarity, apoptosis and DNA damage response. Acts by phosphorylating the T-loop of AMPK family proteins, thus promoting their activity: phosphorylates PRKAA1, PRKAA2, BRSK1, BRSK2, MARK1, MARK2, MARK3, MARK4, NUAK1, NUAK2, SIK1, SIK2, SIK3 and SNRK but not MELK. Also phosphorylates non-AMPK family proteins such as STRADA, PTEN and possibly p53/TP53. Acts as a key upstream regulator of AMPK by mediating phosphorylation and activation of AMPK catalytic subunits PRKAA1 and PRKAA2 and thereby regulates processes including: inhibition of signaling pathways that promote cell growth and proliferation when energy levels are low, glucose homeostasis in liver, activation of autophagy when cells undergo nutrient deprivation, and B-cell differentiation in the germinal center in response to DNA damage. Also acts as a regulator of cellular polarity by remodeling the actin cytoskeleton. Required for cortical neuron polarization by mediating phosphorylation and activation of BRSK1 and BRSK2, leading to axon initiation and specification. Involved in DNA damage response: interacts with p53/TP53 and recruited to the CDKN1A/WAF1 promoter to participate in transcription activation. Able to phosphorylate p53/TP53; the relevance of such result in vivo is however unclear and phosphorylation may be indirect and mediated by downstream STK11/LKB1 kinase NUAK1. Also acts as a mediator of p53/TP53-dependent apoptosis via interaction with p53/TP53: translocates to the mitochondrion during apoptosis and regulates p53/TP53-dependent apoptosis pathways. Regulates UV radiation-induced DNA damage response mediated by CDKN1A. In association with NUAK1, phosphorylates CDKN1A in response to UV radiation and contributes to its degradation which is necessary for optimal DNA repair. Functionally, has a role in spermiogenesis. The polypeptide is Serine/threonine-protein kinase STK11 (Homo sapiens (Human)).